Here is a 133-residue protein sequence, read N- to C-terminus: Small ribosomal subunit protein uS8 (133 aa).

It belongs to the universal ribosomal protein uS8 family. In terms of assembly, part of the 30S ribosomal subunit. Contacts proteins S5 and S12.

Functionally, one of the primary rRNA binding proteins, it binds directly to 16S rRNA central domain where it helps coordinate assembly of the platform of the 30S subunit. This chain is Small ribosomal subunit protein uS8, found in Prochlorococcus marinus (strain MIT 9303).